The primary structure comprises 384 residues: Deoxyguanosinetriphosphate triphosphohydrolase-like protein (384 aa).

An HD domain is found at 62–198; the sequence is RLTHSLEVST…AALADDISYI (137 aa).

This sequence belongs to the dGTPase family. Type 2 subfamily.

This is Deoxyguanosinetriphosphate triphosphohydrolase-like protein from Rickettsia rickettsii (strain Iowa).